The following is a 737-amino-acid chain: Prospero homeobox protein 1 (737 aa).

Residues 1–28 are interaction with RORG; the sequence is MPDHDSTALLSRQTKRRRVDIGVKRTVG. Polar residues predominate over residues 103-135; the sequence is KNGGTEPSFQASGLSSTGSEVHQEDICSNSSRD. A disordered region spans residues 103 to 149; the sequence is KNGGTEPSFQASGLSSTGSEVHQEDICSNSSRDSPPECLSPFGRPTM. Phosphoserine occurs at positions 177, 179, and 199. Residues 178–242 form a disordered region; sequence HSPSVALRGN…REERRQLKQQ (65 aa). The segment covering 213 to 223 has biased composition (low complexity); it reads LPQQQQQSFQQ. Positions 227 to 242 are enriched in basic and acidic residues; that stretch reads ARKEQKREERRQLKQQ. A phosphoserine mark is found at serine 291 and serine 295. Residues 320–337 show a composition bias toward basic and acidic residues; sequence MAENKPKREGNNKERDHG. 2 disordered regions span residues 320 to 344 and 445 to 476; these read MAEN…LQPE and KNSS…TGFT. Lysine 324 participates in a covalent cross-link: Glycyl lysine isopeptide (Lys-Gly) (interchain with G-Cter in SUMO2). A compositionally biased stretch (polar residues) spans 464–476; sequence LHQSPLSATTGFT. A phosphoserine mark is found at serine 511, serine 514, and serine 557. The Prospero-type homeo domain maps to 577–635; that stretch reads QEGLSPNHLKKAKLMFFYTRYPSSNMLKTYFSDVKFNRCITSQLIKWFSNFREFYYIQM. The homeo-Prospero stretch occupies residues 577–735; that stretch reads QEGLSPNHLK…KSPNCLQELL (159 aa). Positions 636-735 constitute a Prospero domain; that stretch reads EKYARQAIND…KSPNCLQELL (100 aa). Residues 723-729 form an essential for nuclear localization, interaction with RORG, repression of RORG transcriptional activator activity region; it reads EIFKSPN.

The protein belongs to the Prospero homeodomain family. In terms of assembly, interacts with RORA and RORG (via AF-2 motif). As to expression, most actively expressed in the developing lens. Detected also in embryonic brain, lung, liver and kidney. In adult, it is more abundant in heart and liver than in brain, skeletal muscle, kidney and pancreas.

The protein localises to the nucleus. In terms of biological role, transcription factor involved in developmental processes such as cell fate determination, gene transcriptional regulation and progenitor cell regulation in a number of organs. Plays a critical role in embryonic development and functions as a key regulatory protein in neurogenesis and the development of the heart, eye lens, liver, pancreas and the lymphatic system. Involved in the regulation of the circadian rhythm. Represses: transcription of the retinoid-related orphan receptor RORG, transcriptional activator activity of RORA and RORG and the expression of RORA/G-target genes including core clock components: BMAL1, NPAS2 and CRY1 and metabolic genes: AVPR1A and ELOVL3. This chain is Prospero homeobox protein 1 (PROX1), found in Homo sapiens (Human).